Reading from the N-terminus, the 293-residue chain is Acetylglutamate kinase (293 aa).

Residues 65–66, Arg-87, and Asn-180 each bind substrate; that span reads GG.

This sequence belongs to the acetylglutamate kinase family. ArgB subfamily.

The protein resides in the cytoplasm. The catalysed reaction is N-acetyl-L-glutamate + ATP = N-acetyl-L-glutamyl 5-phosphate + ADP. It participates in amino-acid biosynthesis; L-arginine biosynthesis; N(2)-acetyl-L-ornithine from L-glutamate: step 2/4. Its function is as follows. Catalyzes the ATP-dependent phosphorylation of N-acetyl-L-glutamate. In Cereibacter sphaeroides (strain ATCC 17029 / ATH 2.4.9) (Rhodobacter sphaeroides), this protein is Acetylglutamate kinase.